The chain runs to 247 residues: Small ribosomal subunit protein uS2 (247 aa).

This sequence belongs to the universal ribosomal protein uS2 family.

This Ralstonia pickettii (strain 12J) protein is Small ribosomal subunit protein uS2.